Consider the following 122-residue polypeptide: Fluoride-specific ion channel FluC 2 (122 aa).

A run of 4 helical transmembrane segments spans residues 3–23 (ITAI…RMFI), 38–58 (TSIV…LNLT), 62–82 (LLLL…SFIY), and 93–113 (FMHL…CFYL). Residues glycine 72 and serine 75 each contribute to the Na(+) site.

Belongs to the fluoride channel Fluc/FEX (TC 1.A.43) family.

It is found in the cell inner membrane. It carries out the reaction fluoride(in) = fluoride(out). With respect to regulation, na(+) is not transported, but it plays an essential structural role and its presence is essential for fluoride channel function. In terms of biological role, fluoride-specific ion channel. Important for reducing fluoride concentration in the cell, thus reducing its toxicity. The sequence is that of Fluoride-specific ion channel FluC 2 from Prochlorococcus marinus (strain MIT 9312).